The chain runs to 201 residues: 3-isopropylmalate dehydratase small subunit (201 aa).

This sequence belongs to the LeuD family. LeuD type 1 subfamily. As to quaternary structure, heterodimer of LeuC and LeuD.

It catalyses the reaction (2R,3S)-3-isopropylmalate = (2S)-2-isopropylmalate. Its pathway is amino-acid biosynthesis; L-leucine biosynthesis; L-leucine from 3-methyl-2-oxobutanoate: step 2/4. Functionally, catalyzes the isomerization between 2-isopropylmalate and 3-isopropylmalate, via the formation of 2-isopropylmaleate. This chain is 3-isopropylmalate dehydratase small subunit, found in Roseobacter denitrificans (strain ATCC 33942 / OCh 114) (Erythrobacter sp. (strain OCh 114)).